The primary structure comprises 683 residues: Rhophilin-2-A (683 aa).

Positions 25–99 (KSIAQTGRSK…LERLNISVEV (75 aa)) constitute an REM-1 domain. A BRO1 domain is found at 110-501 (PLIPLGLKET…TDIFQRLGPL (392 aa)). In terms of domain architecture, PDZ spans 515-592 (KICITKEDGD…QSIEIQVISI (78 aa)).

This sequence belongs to the RHPN family. As to quaternary structure, interacts with RhoA.

It localises to the cytoplasm. Its subcellular location is the perinuclear region. Binds specifically to GTP-Rho. The chain is Rhophilin-2-A (rhpn2-a) from Xenopus laevis (African clawed frog).